Consider the following 141-residue polypeptide: MFACAKLACTPALIRAGSRVAYRPISASVLSRPETRTGEGCTVFNGTQNGVSQLIQREFQTTAVNRDIDTAAKFIGAGAATVGVAGSGAGIGTVFGSLIIGYARNPSLKQQLFSYAILGFALSEAMGLFCLMVAFLILFAM.

A mitochondrion-targeting transit peptide spans 1-66 (MFACAKLACT…REFQTTAVNR (66 aa)). The helical transmembrane segment at 82 to 102 (VGVAGSGAGIGTVFGSLIIGY) threads the bilayer. The residue at position 109 (K109) is an N6,N6,N6-trimethyllysine. Residues 117–137 (ILGFALSEAMGLFCLMVAFLI) form a helical membrane-spanning segment.

It belongs to the ATPase C chain family. F-type ATPases have 2 components, CF(1) - the catalytic core - and CF(0) - the membrane proton channel. CF(1) has five subunits: alpha(3), beta(3), gamma(1), delta(1), epsilon(1). CF(0) has three main subunits: a, b and c. Interacts with TMEM70 and TMEM242. Trimethylated by ATPSCKMT at Lys-109. Methylation is required for proper incorporation of the C subunit into the ATP synthase complex and mitochondrial respiration.

It is found in the mitochondrion membrane. Mitochondrial membrane ATP synthase (F(1)F(0) ATP synthase or Complex V) produces ATP from ADP in the presence of a proton gradient across the membrane which is generated by electron transport complexes of the respiratory chain. F-type ATPases consist of two structural domains, F(1) - containing the extramembraneous catalytic core and F(0) - containing the membrane proton channel, linked together by a central stalk and a peripheral stalk. During catalysis, ATP synthesis in the catalytic domain of F(1) is coupled via a rotary mechanism of the central stalk subunits to proton translocation. Part of the complex F(0) domain. A homomeric c-ring of probably 10 subunits is part of the complex rotary element. The polypeptide is ATP synthase F(0) complex subunit C3, mitochondrial (Bos taurus (Bovine)).